Here is a 763-residue protein sequence, read N- to C-terminus: Putative alpha-1,3-mannosyltransferase MNN15 (763 aa).

The Cytoplasmic segment spans residues 1–7; it reads MRFTLKK. A helical transmembrane segment spans residues 8–28; that stretch reads IFFVFLTLLIISIGYLLLQSV. At 29 to 763 the chain is on the lumenal side; sequence DLQRIRELLH…KDATTVRLRI (735 aa). 3 N-linked (GlcNAc...) asparagine glycosylation sites follow: Asn71, Asn157, and Asn169. The disordered stretch occupies residues 617–659; that stretch reads LVPPDLPNQREPGSPPDTKPEMEFRKSWKSRKKDTDEINEKLP. A compositionally biased stretch (basic and acidic residues) spans 649 to 659; sequence KDTDEINEKLP.

Belongs to the MNN1/MNT family.

The protein localises to the golgi apparatus membrane. It functions in the pathway protein modification; protein glycosylation. In terms of biological role, responsible for addition of the terminal mannose residues to the outer chain of core N-linked polysaccharides and to O-linked mannotriose. Implicated in late Golgi modifications. The polypeptide is Putative alpha-1,3-mannosyltransferase MNN15 (MNN15) (Candida albicans (strain SC5314 / ATCC MYA-2876) (Yeast)).